The chain runs to 213 residues: Thymidylate kinase (213 aa).

An ATP-binding site is contributed by 10 to 17; the sequence is GLEGAGKT.

It belongs to the thymidylate kinase family.

The catalysed reaction is dTMP + ATP = dTDP + ADP. Functionally, phosphorylation of dTMP to form dTDP in both de novo and salvage pathways of dTTP synthesis. The polypeptide is Thymidylate kinase (Escherichia coli O7:K1 (strain IAI39 / ExPEC)).